The primary structure comprises 159 residues: Cyclic pyranopterin monophosphate synthase (159 aa).

Substrate is bound by residues 75-77 (LCH) and 113-114 (ME). Asp128 is a catalytic residue.

It belongs to the MoaC family. In terms of assembly, homohexamer; trimer of dimers.

The enzyme catalyses (8S)-3',8-cyclo-7,8-dihydroguanosine 5'-triphosphate = cyclic pyranopterin phosphate + diphosphate. The protein operates within cofactor biosynthesis; molybdopterin biosynthesis. Its function is as follows. Catalyzes the conversion of (8S)-3',8-cyclo-7,8-dihydroguanosine 5'-triphosphate to cyclic pyranopterin monophosphate (cPMP). The protein is Cyclic pyranopterin monophosphate synthase of Yersinia pseudotuberculosis serotype O:3 (strain YPIII).